The primary structure comprises 91 residues: Non-specific lipid-transfer protein P5 (91 aa).

4 disulfides stabilise this stretch: Cys3/Cys50, Cys13/Cys27, Cys28/Cys73, and Cys48/Cys87.

Its subcellular location is the secreted. Plant non-specific lipid-transfer proteins transfer phospholipids as well as galactolipids across membranes. May play a role in wax or cutin deposition in the cell walls of expanding epidermal cells and certain secretory tissues. This is Non-specific lipid-transfer protein P5 from Vitis sp. (Grape).